The following is a 142-amino-acid chain: Hemoglobin subunit alpha (142 aa).

Residue Ser1 is modified to N-acetylserine. Residues 1–142 (SLSDKDKNTV…LALALSERYR (142 aa)) enclose the Globin domain. His59 is a binding site for O2. His88 lines the heme b pocket.

Belongs to the globin family. As to quaternary structure, heterotetramer of two alpha chains and two beta chains. Can form polymers. In terms of tissue distribution, red blood cells.

Functionally, involved in oxygen transport from gills to the various peripheral tissues. This chain is Hemoglobin subunit alpha (hba), found in Chelidonichthys kumu (Bluefin gurnard).